The following is a 973-amino-acid chain: UvrABC system protein A (973 aa).

34 to 41 contacts ATP; that stretch reads GLSGSGKS. 2 ABC transporter domains span residues 331-609 and 629-958; these read WAKS…PKSL and PKKK…QFLK. 662–669 serves as a coordination point for ATP; that stretch reads GVSGGGKS. A C4-type zinc finger spans residues 761 to 787; that stretch reads CEACQGDGVIKIEMHFLPDVYVTCDVC.

Belongs to the ABC transporter superfamily. UvrA family. In terms of assembly, forms a heterotetramer with UvrB during the search for lesions.

It localises to the cytoplasm. The UvrABC repair system catalyzes the recognition and processing of DNA lesions. UvrA is an ATPase and a DNA-binding protein. A damage recognition complex composed of 2 UvrA and 2 UvrB subunits scans DNA for abnormalities. When the presence of a lesion has been verified by UvrB, the UvrA molecules dissociate. The protein is UvrABC system protein A of Rhizobium meliloti (strain 1021) (Ensifer meliloti).